A 321-amino-acid chain; its full sequence is Glucokinase (321 aa).

Residue 8-13 (GDVGGT) coordinates ATP.

Belongs to the bacterial glucokinase family.

It localises to the cytoplasm. It carries out the reaction D-glucose + ATP = D-glucose 6-phosphate + ADP + H(+). The chain is Glucokinase from Tolumonas auensis (strain DSM 9187 / NBRC 110442 / TA 4).